A 307-amino-acid chain; its full sequence is Homoserine O-acetyltransferase (307 aa).

Cys142 (acyl-thioester intermediate) is an active-site residue. Substrate-binding residues include Lys163 and Ser192. The Proton acceptor role is filled by His235. The active site involves Glu237. Arg249 contacts substrate.

Belongs to the MetA family.

It localises to the cytoplasm. It catalyses the reaction L-homoserine + acetyl-CoA = O-acetyl-L-homoserine + CoA. Its pathway is amino-acid biosynthesis; L-methionine biosynthesis via de novo pathway; O-acetyl-L-homoserine from L-homoserine: step 1/1. In terms of biological role, transfers an acetyl group from acetyl-CoA to L-homoserine, forming acetyl-L-homoserine. The protein is Homoserine O-acetyltransferase of Desulfitobacterium hafniense (strain Y51).